The following is a 271-amino-acid chain: Fatty acid elongase 2 (271 aa).

The chain crosses the membrane as a helical span at residues 16 to 36 (WMIDNVDVAGFLCLLYLGLVW). An N-linked (GlcNAc...) asparagine glycan is attached at asparagine 52. 2 helical membrane-spanning segments follow: residues 59–79 (VFIMWNLFLSTFSVIGMIVVV) and 110–130 (FWVGVFALSKIPELFDTVLLV). The short motif at 140–144 (HWYHH) is the HxxHH motif element. Catalysis depends on histidine 143, which acts as the Nucleophile. 3 helical membrane-spanning segments follow: residues 162 to 182 (IFVFVAMNLTVHAVMYFYFAM), 194 to 214 (IAPVITIMQILQMIVGSAVTM), and 241 to 261 (GVVMYLSYLYLFAALFVESYL).

Belongs to the ELO family.

Its subcellular location is the endoplasmic reticulum membrane. It carries out the reaction an acyl-CoA + malonyl-CoA + H(+) = a 3-oxoacyl-CoA + CO2 + CoA. It functions in the pathway lipid metabolism; fatty acid biosynthesis. Functionally, involved in the synthesis of fatty acids. Elongates C10 fatty acids to C14. This chain is Fatty acid elongase 2, found in Trypanosoma brucei brucei (strain 927/4 GUTat10.1).